The sequence spans 66 residues: Large ribosomal subunit protein bL35 (66 aa).

Basic residues predominate over residues 1–16 (MPKQKTHRASAKRFKR). The interval 1-21 (MPKQKTHRASAKRFKRTGSGG) is disordered.

The protein belongs to the bacterial ribosomal protein bL35 family.

This Streptococcus agalactiae serotype Ia (strain ATCC 27591 / A909 / CDC SS700) protein is Large ribosomal subunit protein bL35.